A 141-amino-acid polypeptide reads, in one-letter code: Hemoglobin subunit alpha-1/2 (141 aa).

The Globin domain maps to 1–141 (VLSPTDKTNV…VSTVLTSKYR (141 aa)). Ser-3 carries the phosphoserine modification. The residue at position 7 (Lys-7) is an N6-succinyllysine. Thr-8 is modified (phosphothreonine). N6-succinyllysine is present on Lys-11. The residue at position 16 (Lys-16) is an N6-acetyllysine; alternate. Position 16 is an N6-succinyllysine; alternate (Lys-16). Tyr-24 carries the phosphotyrosine modification. Position 40 is an N6-succinyllysine (Lys-40). A Phosphoserine modification is found at Ser-49. His-58 is a binding site for O2. His-87 contacts heme b. Phosphoserine is present on Ser-102. Thr-108 is modified (phosphothreonine). The residue at position 124 (Ser-124) is a Phosphoserine. A phosphothreonine mark is found at Thr-134 and Thr-137. Ser-138 bears the Phosphoserine mark.

The protein belongs to the globin family. As to quaternary structure, heterotetramer of two alpha chains and two beta chains. Red blood cells.

Functionally, involved in oxygen transport from the lung to the various peripheral tissues. This is Hemoglobin subunit alpha-1/2 from Tapirus terrestris (Lowland tapir).